The chain runs to 373 residues: T-protein (373 aa).

The Chorismate mutase domain occupies 1–90 (MVAELTALRD…ESYTSENDKG (90 aa)). A Prephenate/arogenate dehydrogenase domain is found at 99–361 (RPVVIVGGKG…DHAKRFLVES (263 aa)).

It in the C-terminal section; belongs to the prephenate/arogenate dehydrogenase family.

It localises to the cytoplasm. The catalysed reaction is chorismate = prephenate. It carries out the reaction prephenate + NAD(+) = 3-(4-hydroxyphenyl)pyruvate + CO2 + NADH. Its pathway is amino-acid biosynthesis; L-tyrosine biosynthesis; (4-hydroxyphenyl)pyruvate from prephenate (NAD(+) route): step 1/1. It functions in the pathway metabolic intermediate biosynthesis; prephenate biosynthesis; prephenate from chorismate: step 1/1. This Enterobacter agglomerans (Erwinia herbicola) protein is T-protein (tyrA).